The chain runs to 418 residues: ATP phosphoribosyltransferase regulatory subunit (418 aa).

Belongs to the class-II aminoacyl-tRNA synthetase family. HisZ subfamily. As to quaternary structure, heteromultimer composed of HisG and HisZ subunits.

Its subcellular location is the cytoplasm. It participates in amino-acid biosynthesis; L-histidine biosynthesis; L-histidine from 5-phospho-alpha-D-ribose 1-diphosphate: step 1/9. In terms of biological role, required for the first step of histidine biosynthesis. May allow the feedback regulation of ATP phosphoribosyltransferase activity by histidine. In Halothermothrix orenii (strain H 168 / OCM 544 / DSM 9562), this protein is ATP phosphoribosyltransferase regulatory subunit.